Here is a 358-residue protein sequence, read N- to C-terminus: Aminomethyltransferase (358 aa).

Belongs to the GcvT family. As to quaternary structure, the glycine cleavage system is composed of four proteins: P, T, L and H.

It catalyses the reaction N(6)-[(R)-S(8)-aminomethyldihydrolipoyl]-L-lysyl-[protein] + (6S)-5,6,7,8-tetrahydrofolate = N(6)-[(R)-dihydrolipoyl]-L-lysyl-[protein] + (6R)-5,10-methylene-5,6,7,8-tetrahydrofolate + NH4(+). In terms of biological role, the glycine cleavage system catalyzes the degradation of glycine. In Francisella tularensis subsp. tularensis (strain WY96-3418), this protein is Aminomethyltransferase.